We begin with the raw amino-acid sequence, 401 residues long: Acetate kinase (401 aa).

Asn7 contacts Mg(2+). An ATP-binding site is contributed by Lys14. Arg91 lines the substrate pocket. Asp148 (proton donor/acceptor) is an active-site residue. ATP is bound by residues 208 to 212, 283 to 285, and 332 to 336; these read HLGNG, DFR, and GVGEN. Residue Glu385 participates in Mg(2+) binding.

The protein belongs to the acetokinase family. Homodimer. It depends on Mg(2+) as a cofactor. Mn(2+) is required as a cofactor.

The protein resides in the cytoplasm. The enzyme catalyses acetate + ATP = acetyl phosphate + ADP. It functions in the pathway metabolic intermediate biosynthesis; acetyl-CoA biosynthesis; acetyl-CoA from acetate: step 1/2. Its function is as follows. Catalyzes the formation of acetyl phosphate from acetate and ATP. Can also catalyze the reverse reaction. The sequence is that of Acetate kinase from Thermoanaerobacter pseudethanolicus (strain ATCC 33223 / 39E) (Clostridium thermohydrosulfuricum).